Reading from the N-terminus, the 525-residue chain is Lysine--tRNA ligase (525 aa).

Residues 40 to 48 carry the 'HIGH' region motif; sequence ASGIPHMGS. The short motif at 295 to 299 is the 'KMSKS' region element; sequence KISKS. Lysine 298 contributes to the ATP binding site.

Belongs to the class-I aminoacyl-tRNA synthetase family.

The protein resides in the cytoplasm. The enzyme catalyses tRNA(Lys) + L-lysine + ATP = L-lysyl-tRNA(Lys) + AMP + diphosphate. This Cenarchaeum symbiosum (strain A) protein is Lysine--tRNA ligase (lysS).